Consider the following 536-residue polypeptide: Phosphoenolpyruvate carboxykinase (ATP) (536 aa).

Residues R61, Y195, and K201 each contribute to the substrate site. Residues K201, H220, and 236 to 244 contribute to the ATP site; that span reads GLSGTGKTT. 2 residues coordinate Mn(2+): K201 and H220. Residue D257 participates in Mn(2+) binding. Positions 285, 322, and 447 each coordinate ATP. Residue R322 coordinates substrate.

Belongs to the phosphoenolpyruvate carboxykinase (ATP) family. The cofactor is Mn(2+).

The protein resides in the cytoplasm. The enzyme catalyses oxaloacetate + ATP = phosphoenolpyruvate + ADP + CO2. Its pathway is carbohydrate biosynthesis; gluconeogenesis. Functionally, involved in the gluconeogenesis. Catalyzes the conversion of oxaloacetate (OAA) to phosphoenolpyruvate (PEP) through direct phosphoryl transfer between the nucleoside triphosphate and OAA. This chain is Phosphoenolpyruvate carboxykinase (ATP), found in Rhizobium meliloti (strain 1021) (Ensifer meliloti).